The primary structure comprises 174 residues: Small ribosomal subunit protein uS5c (174 aa).

The S5 DRBM domain maps to 17–80; it reads WEERVVQVKR…TDAKKHLVTV (64 aa).

This sequence belongs to the universal ribosomal protein uS5 family. Part of the 30S ribosomal subunit. Contacts protein S4.

It localises to the plastid. It is found in the chloroplast. Its function is as follows. With S4 and S12 plays an important role in translational accuracy. The sequence is that of Small ribosomal subunit protein uS5c (rps5) from Pyropia yezoensis (Susabi-nori).